A 132-amino-acid polypeptide reads, in one-letter code: Iron-sulfur cluster assembly 1 homolog, mitochondrial (132 aa).

The transit peptide at M1–A15 directs the protein to the mitochondrion. Fe cation-binding residues include C60, C124, and C126.

This sequence belongs to the HesB/IscA family. As to quaternary structure, homooligomer, forming a rod-shaped structure 24 nm in length that may arise through a double-helical assembly of subunits. Interacts with CRY4; CRY4 seems to be associated with the outside of the rod-shaped homooligomer. Does not interact with CRY1 or CRY2. As to expression, detected in retina, especially in the retinal ganglion layer, the inner nuclear layer and the outer nuclear layer. Detected in retina visual pigment cells (at protein level).

Its subcellular location is the mitochondrion. In terms of biological role, involved in the maturation of mitochondrial 4Fe-4S proteins functioning late in the iron-sulfur cluster assembly pathway. Probably involved in the binding of an intermediate of Fe/S cluster assembly. Component of a putative magnetoreceptor complex formed by ISCA1 and CRY4, a member of the cryptochrome family that are known to be required for light-dependent magnetosensitivity in various orgnisms. The rod-like assembly may facilitate the perception of the Earth's weak magnetic field. Both ISCA1 and the complex with CRY4 have magnetic properties and are attracted to iron beads. When exposed to a magnetic field of 1 mT (superior to the natural magnetic field), over 50% of the rod-like complexes align more or less in parallel with the magnetic field at room temperature. The chain is Iron-sulfur cluster assembly 1 homolog, mitochondrial (ISCA1) from Columba livia (Rock dove).